The chain runs to 278 residues: ABC transporter I family member 11, chloroplastic (278 aa).

Residues 1-49 (MAVSTFSSPTPVFGIAEPPASFSSTAIGWKQPLRFRRTKKPRVISCDYS) constitute a chloroplast transit peptide. Positions 51 to 278 (IEVRDVCYRP…GVLVAERPPL (228 aa)) constitute an ABC transporter domain. 85–92 (GKSGSGKT) provides a ligand contact to ATP.

This sequence belongs to the ABC transporter superfamily. ABCI family.

It is found in the plastid. It localises to the chloroplast. The protein is ABC transporter I family member 11, chloroplastic (ABCI11) of Arabidopsis thaliana (Mouse-ear cress).